A 57-amino-acid polypeptide reads, in one-letter code: UPF0057 membrane protein T23F2.5 (57 aa).

The next 2 membrane-spanning stretches (helical) occupy residues 3–23 (LTCT…IGVW) and 36–56 (ILLT…VILA).

Belongs to the UPF0057 (PMP3) family.

It is found in the membrane. The sequence is that of UPF0057 membrane protein T23F2.5 from Caenorhabditis elegans.